Here is a 6885-residue protein sequence, read N- to C-terminus: MASSPELPTEDEQGSWGIDDLHISLQAEQEDTQKKAFTCWINSQLARHTSPSVISDLFTDIKKGHVLLDLLEVLSGQQLPRDKGSNTFQCRINIEHALTFLRNRSIKLINIHVTDIIDGNPSIILGLIWTIILHFHIEKLAQTLSCNYNQPSLDDVSVVDSSPASSPPAKKCSKVQARWQMSARKALLLWAQEQCATYESVNVTDFKSSWRNGMAFLAIIHALRPDLIDMKSVKHRSNKDNLREAFRIAEQELKIPRLLEPEDVDVVDPDEKSIMTYVAQFLQYSKDAPGTGEEAQGKVKDAMGWLTLQKEKLQKLLKDSENDTYFKKYNSLLSFMESFNEEKKSFLDVLSIKRDLDELDKDHLQLREAWDGLDHQINAWKIKLNYALPPPLHQTEAWLQEVEELMDEDLSASQDHSQAVTLIQEKMTLFKSLMDRFEHHSNILLTFENKDENHLPLVPPNKLEEMKRRINNILEKKFILLLEFHYYKCLVLGLVDEVKSKLDIWNIKYGSRESVELLLEDWHKFIEEKEFLARLDTSFQKCGEIYKNLAGECQNINKQYMMVKSDVCMYRKNIYNVKSTLQKVLACWATYVENLRLLRACFEETKKEEIKEVPFETLAQWNLEHATLNEAGNFLVEVSNDVVGSSISKELRRLNKRWRKLVSKTQLEMNLPLMIKKQDQPTFDNSGNILSKEEKATVEFSTDMSVELPENYNQNIKAGEKHEKENEEFTGQLKVAKDVEKLIGQVEIWEAEAKSVLDQDDVDTSMEESLKHLIAKGSMFDELMARSEDMLQMDIQNISSQESFQHVLTTGLQAKIQEAKEKVQINVVKLIAALKNLTDVSPDLDIRLKMEESQKELESYMMRAQQLLGQRESPGELISKHKEALIISNTKSLAKYLKAVEELKNNVTEDIKMSLEEKSRDVCAKWESLHHELSLYVQQLKIDIEKGKLSDNILKLEKQINKEKKLIRRGRTKGLIKEHEACFSEEGCLYQLNHHMEVLRELCEELPSQKSQQEVKRLLKDYEQKIERLLKCASEIHMTLQPTAGGTSKNEGTITTSENRGGDPHSEAPFAKSDNQPSTEKAMEPTMKFSLASVLRPLQEESIMEKDYSASINSLLERYDTYRDILEHHLQNNKFRITSDFSSEEDRSSSCLQAKLTDLQVIKNETDARWKEFEIISLKLENHVNDIKKPFVIKERDTLKERERELQMTLNTRMESLETALRLVLPVEKASLLLCGSDLPLHKMAIQGFHLIDADRIYQHLRNIQDSIAKQIEICNRLEEPGNFVLKELHPFDLHAMQNIILKYKTQFEGMNHRVQRSEDTLKALEDFLASLRTAKLSAEPVTDLSASDTQVAQENTLTVKNKEGEIHLMKDKAKHLDKCLKMLDMSFKDAERGDDTSCENLLDAFSIKLSETHGYGVQEEFTEENKLLEACIFKNNELLKNIQDVQSQISKIGLKDPTVPAVKHRKKSLIRLDKVLDEYEEEKRHLQEMANSLPHFKDGREKTVNQQCQNTVVLWENTKALVTECLEQCGRVLELLKQYQNFKSILTTLIQKEESVISLQASYMGKENLKKRIAEIEIVKEEFNEHLEVVDKINQVCKNLQFYLNKMKTFEEPPFEKEANIIVDRWLDINEKTEDYYENLGRALALWDKLFNLKNVIDEWTEKALQKMELHQLTEEDRERLKEELQVHEQKTSEFSRRVAEIQFLLQSSEIPLELQVMESSILNKMEHVQKCLTGESNCHALSGSTAELREDLDQAKTQIGMTESLLKALSPSDSLEIFTKLEEIQQQILQQKHSMILLENQIGCLTPELSELKKQYESVSDLFNTKKSVLQDHFSKLLNDQCKNFNDWFSNIKVNLKECFESSETKKSVEQKLQKLSDFLTLEGRNSKIKQVDSVLKHVKKHLPKAHVKELISWLVGQEFELEKMESICQARAKELEDSLQQLLRLQDDHRNLRKWLTNQEEKWKGMEEPGEKTELFCQALARKREQFESVAQLNNSLKEYGFTEEEEIIMEATCLMDRYQTLLRQLSEIEEEDKLLPTEDQSFNDLAHDVIHWIKEIKESLMVLNSSEGKMPLEERIQKIKEIILLKPEGDARIETIMKQAESSEAPLVQKTLTDISNQWDNTLHLASTYLSHQEKLLLEGEKYLQSKEDLRLMLIELKKKQEAGFALQHGLQEKKAQLKIYKKFLKKAQDLTSLLKELKSQGNYLLECTKNPSFSEEPWLEIKHLHESLLQQLQDSVQNLDGHVREHDSYQVCVTDLNTTLDNFSKEFVSFSDKPVDQIAVEEKLQKLQELENRLSLQDGTLKKILALAKSVKQNTSSVGQKIIKDDIKSLQCKQKDLENRLASAKQEMECCLNSILKSKRSTEKKGKFTLPGREKQATSDVQESTQESAAVEKLEEDWEINKDSAVEMAMSKQLSLNAQESMKNTEDERKVNELQNQPLELDTMLRNEQLEEIEKLYTQLEAKKAAIKPLEQTECLNKTETGALVLHNIGYSAQHLDNLLQALITLKKNKESQYCVLRDFQEYLAAVESSMKALLTDKESLKVGPLDSVTYLDKIKKFIASIEKEKDSLGNLKIKWENLSNHVTDMDKKLLESQIKQLEHGWEQVEQQIQKKYSQQVVEYDEFTTLMNKVQDTEISLQQQQQHLQLRLKSPEERAGNQSMIALTTDLQATKHGFSVLKGQAELQMKRIWGEKEKKNLEDGINNLKKQWETLEPLHLEAENQIKKCDIRNKMKETILWAKNLLGELNPSIPLLPDDILSQIRKCKVTHDGILARQQSVESLAEEVKDKVPSLTTYEGSDLNNTLEDLRNQYQMLVLKSTQRSQQLEFKLEERSNFFAIIRKFQLMVQESETLIIPRVETAATEAELKHHHVTLEASQKELQEIDSGISTHLQELTNIYEELNVFERLFLEDQLKNLKIRTNRIQRFIQNTCNEVEHKIKFCRQFHEKTSALQEEADSIQRNELLLNQEVNKGVKEEIYNLKDRLTAIKCCILQVLKLKKVFDYIGLNWDFSQLDQLQTQVFEKEKELEEKIKQLDTFEEEHGKYQALLSKMRAIDLQIKKMTEVVLKAPDSSPESRRLNAQILSQRIEKAKCLCDEIIKKLNENKTFDDSFKEKEILQIKLNAEENDKLYKVLQNMVLELSPKELDEKNCQDKLETSLHVLNQIKSQLQQPLLINLEIKHIQNEKDNCEAFQEQVWAEMCSIKAVTAIEKQREENSSEASDVETKLREFEDLQMQLNTSIDLRTNVLNDAYENLTRYKEAVTRAVESITSLEAIIIPYRVDVGNPEESLEMPLRKQEELESTVAHIQDLTEKLGMISSPEAKLQLQYTLQELVSKNSAMKEAFKAQETEAERYLENYKCYRKMEEDIYTNLSKMETVLGQSMSSLPLSYREALERLEQSKALVSNLISTKEELMKLRQILRLLRLRCTENDGICLLKIVSALWEKWLSLLEAAKEWEMWCEELKQEWKFVSEEIEREAIILDNLQEELPEISKTKEAATTEELSELLDCLCQYGENVEKQQLLLTLLLQRIRSIQNVPESSGAVETVPAFQEITSMKERCNKLLQKVQKNKELVQTEIQERHSFTKEIIALKNFFQQTTTSFQNMAFQDHPEKSEQFEELQSILKKGKLTFENIMEKLRIKYSEMYTIVPAEIESQVEECRKALEDIDEKISNEVLKSSPSYAMRRKIEEINNGLHNVEKMLQQKSKNIEKAQEIQKKMWDELDLWHSKLNELDSEVQDIVEQDPGQAQEWMDNLMIPFQQYQQVSQRAECRTSQLNKATVKMEEYSDLLKSTEAWIENTSHLLANPADYDSLRTLSHHASTVQMALEDSEQKHNLLHSIFMDLEDLSIIFETDELTQSIQELSNQVTALQQKIMESLPQIQRMADDVVAIESEVKSMEKRVSKIKTILLSKEIFDFSPEEHLKHGEVILENIRPMKKTIAEIVSYQVELRLPQTGMKPLPVFQRTNQLLQDIKLLENVTQEQNELLKVVIKQTNEWDEEIENLKQILNNYSAQFSLEHMSPDQADKLPQLQGEIERMEKQILSLNQRKEDLLVDLKATVLNLHQHLKQEQEGVERDRLPAVTSEEGGVAERDASERKLNRRGSMSYLAAVEEEVEESSVKSDNGDEKAEPSPQSWSSLWKHDKDMEEDRASSSSGTIVQEAYGKISTSDNSMAQILTPDSLNTEQGPECSLRPNQTEEGTTPPIEADTLDSSDAQGGLEPRVEKTRPEPTEVLHACKTQVAELELWLQQANVAVEPETLNADMQQVLEQQLVGCQAMLTEIEHKVAFLLETCKDQGLGDNGATQHEAEALSLKLKTVKCNLEKVQMMLQEKHSEDQHPTILKKSSEPEHQEALQPVNLSELESIVTERPQFSRQKDFQQQQVLELKPMEQKDFIKFIEFNAKKMWPQYCQHDNDTTQESSASNQASSPENDVPDSILSPQGQNGDKWQYLHHELSSKIKLPLPQLVEPQVSTNMGILPSVTMYNFRYPTTEELKTYTTQLEDLRQEASNLQTQENMTEEAYINLDKKLFELFLTLSQCLSSVEEMLEMPRLYREDGSGQQVHYETLALELKKLYLALSDKKGDLLKAMTWPGENTNLLLECFDNLQVCLEHTQAAAVCRSKSLKAGLDYNRSYQNEIKRLYHQLIKSKTSLQQSLNEISGQSVAEQLQKADAYTVELENAESRVAKLRDEGERLHLPYALLQEVYKLEDVLDSMWGMLRARYTELSSPFVTESQQDALLQGMVELVKIGKEKLAHGHLKQTKSKVALQAQIENHKVFFQKLVADMLLIQAYSAKILPSLLQNRETFWAEQVTEVKILEEKSRQCGMKLQSLLQKWEEFDENYASLEKDLEILISTLPSVSLVEETEERLVERISFYQQIKRNIGGKHARLYQTLNEGKQLVASVSCPELEGQIAKLEEQWLSLNKKIDHELHRLQALLKHLLSYNRDSDQLTKWLESSQHTLNYWKEQSLNVSQDLDTIRSNINNFFEFSKEVDEKSSLKTAVISIGNQLLHLKETDTATLRASLAQFEQKWTMLITQLPDIQEKLHQLQMEKLPSRKAITEMISWMNNVEHQTSDEDSVHSPSSASQVKHLLQKHKEFRMEMDYKQWIVDFVNQSLLQLSTCDVESKRYERTEFAEHLGEMNRQWHRVHGMLNRKIQHLEQLLESITESENKIQILNNWLEAQEERLKTLQKPESVISVQKLLLDCQDIENQLAIKSKALDELKQSYLTLESGAVPLLEDTASRIDELFQKRSSVLTQVNQLKTSMQSVLQEWKIYDQLYDEVNMMTIRFWYCMEHSKPVVLSLETLRCQVENLQSLQDEAESSEGSWEKLQEVIGKLKGLCPSVAEIIEEKCQNTHKRWTQVNQAIADQLQKAQSLLQLWKAYSNAHGEAAARLKQQEAKFQQLANISMSGNNLAEILPPALQDIKELQHDVQKTKEAFLQNSSVLDRLPQPAESSTHMLLPGPLHSLQRAAYLEKMLLVKANEFEFVLSQFKDFGVRLESLKGLIMHEEENLDRLHQQEKENPDSFLNHVLALTAQSPDIEHLNEVSLKLPLSDVAVKTLQNMNRQWIRATATALERCSELQGIGLNEKFLYCCEKWIQLLEKIEEALKVDVANSLPELLEQQKTYKMLEAEVSINQTIADSYVTQSLQLLDTTEIENRPEFITEFSKLTDRWQNAVQGVRQRKGDVDGLVRQWQDFTTSVENLFRFLTDTSHLLSAVKGQERFSLYQTRSLIHELKNKEIHFQRRRTTCALTLEAGEKLLLTTDLKTKESVGRRISQLQDSWKDMEPQLAEMIKQFQSTVETWDQCEKKIKELKSRLQVLKAQSEDPLPELHEDLHNEKELIKELEQSLASWTQNLKELQTMKADLTRHVLVEDVMVLKEQIEHLHRQWEDLCLRVAIRKQEIEDRLNTWVVFNEKNKELCAWLVQMENKVLQTADISIEEMIEKLQKDCMEEINLFSENKLQLKQMGDQLIKASNKSRAAEIDDKLNKINDRWQHLFDVIGSRVKKLKETFAFIQQLDKNMSNLRTWLARIESELSKPVVYDVCDDQEIQKRLAEQQDLQRDIEQHSAGVESVFNICDVLLHDSDACANETECDSIQQTTRSLDRRWRNICAMSMERRMKIEETWRLWQKFLDDYSRFEDWLKSAERTAACPNSSEVLYTSAKEELKRFEAFQRQIHERLTQLELINKQYRRLARENRTDTASRLKQMVHEGNQRWDNLQRRVTAVLRRLRHFTNQREEFEGTRESILVWLTEMDLQLTNVEHFSESDADDKMRQLNGFQQEITLNTNKIDQLIVFGEQLIQKSEPLDAVLIEDELEELHRYCQEVFGRVSRFHRRLTSCTPGLEDEKEASENETDMEDPREIQTDSWRKRGESEEPSSPQSLCHLVAPGHERSGCETPVSVDSIPLEWDHTGDVGGSSSHEEDEEGPYYSALSGKSISDGHSWHVPDSPSCPEHHYKQMEGDRNVPPVPPASSTPYKPPYGKLLLPPGTDGGKEGPRVLNGNPQQEDGGLAGITEQQSGAFDRWEMIQAQELHNKLKIKQNLQQLNSDISAITTWLKKTEAELEMLKMAKPPSDIQEIELRVKRLQEILKAFDTYKALVVSVNVSSKEFLQTESPESTELQSRLRQLSLLWEAAQGAVDSWRGGLRQSLMQCQDFHQLSQNLLLWLASAKNRRQKAHVTDPKADPRALLECRRELMQLEKELVERQPQVDMLQEISNSLLIKGHGEDCIEAEEKVHVIEKKLKQLREQVSQDLMALQGTQNPASPLPSFDEVDSGDQPPATSVPAPRAKQFRAVRTTEGEEETESRVPGSTRPQRSFLSRVVRAALPLQLLLLLLLLLACLLPSSEEDYSCTQANNFARSFYPMLRYTNGPPPT.

The tract at residues 1–286 is actin-binding; the sequence is MASSPELPTE…YVAQFLQYSK (286 aa). The Cytoplasmic portion of the chain corresponds to 1 to 6834; it reads MASSPELPTE…QRSFLSRVVR (6834 aa). Calponin-homology (CH) domains lie at 31–136 and 181–286; these read DTQK…LHFH and MSAR…QYSK. Spectrin repeat units follow at residues 297-378, 379-472, 473-575, 576-680, 735-838, 839-932, and 933-1034; these read GKVK…HQIN, AWKI…RINN, ILEK…KNIY, NVKS…KQDQ, VAKD…KNLT, DVSP…LHHE, and LSLY…KCAS. A coiled-coil region spans residues 297–6782; that stretch reads GKVKDAMGWL…PASPLPSFDE (6486 aa). Ser841 is modified (phosphoserine). The residue at position 955 (Lys955) is an N6-acetyllysine. Over residues 1042–1059 the composition is skewed to polar residues; that stretch reads PTAGGTSKNEGTITTSEN. The interval 1042–1084 is disordered; that stretch reads PTAGGTSKNEGTITTSENRGGDPHSEAPFAKSDNQPSTEKAME. Spectrin repeat units lie at residues 1121 to 1212, 1263 to 1323, 1324 to 1419, 1420 to 1524, 1525 to 1636, 1637 to 1738, 1739 to 1830, 1831 to 1938, 1939 to 2036, 2037 to 2132, 2133 to 2243, and 2244 to 2360; these read TYRD…TLNT, NIQD…DTLK, ALED…YGVQ, EEFT…ALVT, ECLE…KTED, YYEN…TGES, NCHA…TKKS, VLQD…AKEL, EDSL…EEED, KLLP…LAST, YLSH…SVQN, and LDGH…LNSI. Residues 2368–2382 are compositionally biased toward basic and acidic residues; it reads EKKGKFTLPGREKQA. The interval 2368–2394 is disordered; that stretch reads EKKGKFTLPGREKQATSDVQESTQESA. Positions 2383-2393 are enriched in polar residues; that stretch reads TSDVQESTQES. Spectrin repeat units follow at residues 2432–2513, 2514–2620, 2621–2717, 2718–2831, 2832–2933, 2934–3036, 3037–3142, 3143–3248, 3249–3352, 3353–3465, 3466–3573, 3574–3679, 3680–3777, 3778–3880, 3881–3986, and 3987–4086; these read DERK…TLKK, NKES…KYSQ, QVVE…ETLE, PLHL…QLEF, KLEE…FIQN, TCNE…EKIK, QLDT…NMVL, ELSP…DLRT, NVLN…AQET, EAER…MWCE, ELKQ…KVQK, NKEL…SNEV, LKSS…ECRT, SQLN…KIME, SLPQ…VTQE, and QNEL…LPAV. Residue Ser2781 is modified to Phosphoserine. 2 stretches are compositionally biased toward basic and acidic residues: residues 4073–4083 and 4093–4102; these read QEQEGVERDRL and VAERDASERK. Disordered stretches follow at residues 4073-4162, 4184-4232, 4335-4363, and 4416-4448; these read QEQE…SGTI, DSLN…KTRP, EKHS…PVNL, and HDND…QGQN. Ser4108 carries the post-translational modification Phosphoserine. Composition is skewed to basic and acidic residues over residues 4122–4134 and 4144–4155; these read SSVK…EKAE and WKHDKDMEEDRA. One copy of the Spectrin 36 repeat lies at 4229–4348; that stretch reads KTRPEPTEVL…EDQHPTILKK (120 aa). Positions 4335-4356 are enriched in basic and acidic residues; that stretch reads EKHSEDQHPTILKKSSEPEHQE. Residues 4421–4434 are compositionally biased toward polar residues; that stretch reads TQESSASNQASSPE. Spectrin repeat units lie at residues 4520-4639, 4640-4727, 4728-4837, 4838-4943, 4944-5051, 5052-5164, 5165-5266, 5267-5391, 5392-5487, 5488-5589, 5590-5704, 5705-5799, 5800-5907, 5908-6017, 6018-6135, 6136-6243, and 6244-6355; these read NMTE…RSYQ, NEIK…RARY, TELS…QSLL, QKWE…QALL, KHLL…QEKL, HQLQ…KIQH, LEQL…TQVN, QLKT…KAYS, NAHG…MLLV, KANE…CSEL, QGIG…QWQD, FTTS…PQLA, EMIK…RVAI, RKQE…VKKL, KETF…EETW, RLWQ…LRHF, and TNQR…PGLE. Residue Ser5785 is modified to Phosphoserine. The segment covering 6354 to 6367 has biased composition (acidic residues); sequence LEDEKEASENETDM. Residues 6354 to 6508 form a disordered region; it reads LEDEKEASEN…GTDGGKEGPR (155 aa). A phosphoserine mark is found at Ser6361, Ser6384, Ser6411, Ser6428, Ser6429, Ser6430, and Ser6459. A compositionally biased stretch (basic and acidic residues) spans 6368 to 6384; that stretch reads EDPREIQTDSWRKRGES. Spectrin repeat units follow at residues 6461-6549, 6550-6665, and 6666-6782; these read SCPE…KLKI, KQNL…QCQD, and FHQL…SFDE. Positions 6463 to 6474 are enriched in basic and acidic residues; sequence PEHHYKQMEGDR. The segment covering 6477–6489 has biased composition (pro residues); it reads PPVPPASSTPYKP. Residues 6490 to 6499 are compositionally biased toward low complexity; that stretch reads PYGKLLLPPG. A disordered region spans residues 6769–6824; the sequence is GTQNPASPLPSFDEVDSGDQPPATSVPAPRAKQFRAVRTTEGEEETESRVPGSTRP. In terms of domain architecture, KASH spans 6826–6885; it reads RSFLSRVVRAALPLQLLLLLLLLLACLLPSSEEDYSCTQANNFARSFYPMLRYTNGPPPT. The helical; Anchor for type IV membrane protein transmembrane segment at 6835-6855 threads the bilayer; it reads AALPLQLLLLLLLLLACLLPS. The Perinuclear space segment spans residues 6856-6885; it reads SEEDYSCTQANNFARSFYPMLRYTNGPPPT. Positions 6872–6885 are sufficient for interaction with SUN2; sequence FYPMLRYTNGPPPT.

This sequence belongs to the nesprin family. In terms of assembly, core component of LINC complexes which are composed of inner nuclear membrane SUN domain-containing proteins coupled to outer nuclear membrane KASH domain-containing nesprins. SUN and KASH domain-containing proteins seem to bind each other promiscuously; however, some LINC complex constituents are tissue- or cell type-specific. At least SUN1/2-containing core LINC complexes are proposed to be hexameric composed of three protomers of each KASH and SUN domain-containing protein. The SUN2:SYNE2/KASH2 complex is a heterohexamer; the homotrimeric cloverleave-like conformation of the SUN domain is a prerequisite for LINC complex formation in which three separate SYNE2/KASH2 peptides bind at the interface of adjacent SUN domains. Interacts with EMD, LMNA, MKS3 and F-actin via its N-terminal domain. Interacts with DCTN1 and DYNC1I1/2; suggesting the association with the dynein-dynactin motor complex. Associates with kinesin motor complexes. Interacts with TMEM67. Interacts (via KASH domain) with TMEM258. Interacts with BROX; this interaction promotes SYN2 ubiquitination and facilitates the relaxation of mechanical stress imposed by compressive actin fibers at the rupture site. Post-translationally, the disulfid bond with SUN2 is required for stability of the SUN2:SYNE2/KASH2 LINC complex under tensile forces though not required for the interaction. In terms of processing, ubiquitinated, targeting it for degradation. As to expression, widely expressed, with higher level in kidney, adult and fetal liver, stomach and placenta. Weakly expressed in skeletal muscle and brain. Isoform 5 is highly expressed in pancreas, skeletal muscle and heart.

It is found in the nucleus outer membrane. The protein localises to the sarcoplasmic reticulum membrane. The protein resides in the cell membrane. It localises to the cytoplasm. Its subcellular location is the cytoskeleton. It is found in the mitochondrion. The protein localises to the nucleus. The protein resides in the nucleoplasm. It localises to the myofibril. Its subcellular location is the sarcomere. It is found in the z line. The protein localises to the cell junction. The protein resides in the focal adhesion. Multi-isomeric modular protein which forms a linking network between organelles and the actin cytoskeleton to maintain the subcellular spatial organization. As a component of the LINC (LInker of Nucleoskeleton and Cytoskeleton) complex involved in the connection between the nuclear lamina and the cytoskeleton. The nucleocytoplasmic interactions established by the LINC complex play an important role in the transmission of mechanical forces across the nuclear envelope and in nuclear movement and positioning. Specifically, SYNE2 and SUN2 assemble in arrays of transmembrane actin-associated nuclear (TAN) lines which are bound to F-actin cables and couple the nucleus to retrograde actin flow during actin-dependent nuclear movement. May be involved in nucleus-centrosome attachment. During interkinetic nuclear migration (INM) at G2 phase and nuclear migration in neural progenitors its LINC complex association with SUN1/2 and probable association with cytoplasmic dynein-dynactin motor complexes functions to pull the nucleus toward the centrosome; SYNE1 and SYNE2 may act redundantly. During INM at G1 phase mediates respective LINC complex association with kinesin to push the nucleus away from the centrosome. Involved in nuclear migration in retinal photoreceptor progenitors. Required for centrosome migration to the apical cell surface during early ciliogenesis. Facilitates the relaxation of mechanical stress imposed by compressive actin fibers at the rupture site through its nteraction with SYN2. In Homo sapiens (Human), this protein is Nesprin-2.